The chain runs to 691 residues: MSRSRSSAKAVQFKHESEEEEEDEEEQLPSRRMHSYGDAAAIGSGVPAFLAKLWRLVDDADTNRLICWTKDGQSFVIQNQAQFAKELLPLNYKHNNMASFIRQLNMYGFHKITSIDNGGLRFDRDEIEFSHPFFKRNSPFLLDQIKRKISNNKNGDDKGVLKPEAMSKILTDVKVMRGRQDNLDSRFSAMKQENEVLWREIASLRQKHAKQQQIVNKLIQFLITIVQPSRNMSGVKRHVQLMINNTPEIDRARTTSETESESGGGPVIHELREELLDEVMNPSPAGYTAASHYDQESVSPPAVERPRSNMSISSHNVDYSNQSVEDLLLQGNGTAGGNILVGGAASPMAQSVSQSPAQHDVYTVTEAPDSHVQEVPNSPPYYEEQNVLTTPMVREQEQQKRQQLKENNKLRRQAGDVILDAGDILVDSSSPKAQRTSIQHSTQPDVMVQPMIIKSEPENSSGLMDLMTPANDLYSVNFISEDMPTDIFEDALLPDGVEEAAKLDQQQKFGQSTVSSGKFASNFDVPTNSTLLDANQASTSKAAAKAQASEEEGMAVAKYSGAENGNNRDTNNSQLLRMASVDELHGHLESMQDELETLKDLLRGDGVAIDQNMLMGLFNDSDLMDNYGLSFPNDSISSEKKAPSGSELISYQPMYDLSDILDTDDGNNDQEASRRQMQTQSSVLNTPRHEL.

Residues 1–31 (MSRSRSSAKAVQFKHESEEEEEDEEEQLPSR) are disordered. The segment covering 18–27 (EEEEEDEEEQ) has biased composition (acidic residues). Residues 46–150 (VPAFLAKLWR…LLDQIKRKIS (105 aa)) mediate DNA binding. Ser256 bears the Phosphoserine mark. Thr258 is modified (phosphothreonine). Phosphoserine is present on residues Ser260, Ser283, Ser299, and Ser580. The disordered stretch occupies residues 288–307 (TAASHYDQESVSPPAVERPR). The segment at 658–691 (SDILDTDDGNNDQEASRRQMQTQSSVLNTPRHEL) is disordered. Over residues 659 to 668 (DILDTDDGNN) the composition is skewed to acidic residues. Positions 675-685 (RQMQTQSSVLN) are enriched in polar residues.

The protein belongs to the HSF family. In terms of assembly, homotrimer. Post-translationally, exhibits temperature-dependent phosphorylation.

It localises to the nucleus. In terms of biological role, DNA-binding protein that specifically binds heat shock promoter elements (HSE) and activates transcription. In higher eukaryotes, HSF is unable to bind to the HSE unless the cells are heat shocked. The chain is Heat shock factor protein (Hsf) from Drosophila melanogaster (Fruit fly).